A 305-amino-acid chain; its full sequence is Glycine--tRNA ligase alpha subunit (305 aa).

This sequence belongs to the class-II aminoacyl-tRNA synthetase family. As to quaternary structure, tetramer of two alpha and two beta subunits.

Its subcellular location is the cytoplasm. The catalysed reaction is tRNA(Gly) + glycine + ATP = glycyl-tRNA(Gly) + AMP + diphosphate. This chain is Glycine--tRNA ligase alpha subunit, found in Streptococcus pyogenes serotype M18 (strain MGAS8232).